The sequence spans 440 residues: Trigger factor (440 aa).

The PPIase FKBP-type domain occupies 176-261 (GDKVVIDYQN…VKSIYVVKDV (86 aa)).

It belongs to the FKBP-type PPIase family. Tig subfamily.

The protein localises to the cytoplasm. It catalyses the reaction [protein]-peptidylproline (omega=180) = [protein]-peptidylproline (omega=0). Functionally, involved in protein export. Acts as a chaperone by maintaining the newly synthesized protein in an open conformation. Functions as a peptidyl-prolyl cis-trans isomerase. The chain is Trigger factor from Ehrlichia canis (strain Jake).